The primary structure comprises 370 residues: UDP-N-acetylglucosamine--N-acetylmuramyl-(pentapeptide) pyrophosphoryl-undecaprenol N-acetylglucosamine transferase (370 aa).

Residues 15 to 17 (TGG), N129, R170, S200, I253, and Q298 each bind UDP-N-acetyl-alpha-D-glucosamine.

Belongs to the glycosyltransferase 28 family. MurG subfamily.

It is found in the cell inner membrane. The catalysed reaction is di-trans,octa-cis-undecaprenyl diphospho-N-acetyl-alpha-D-muramoyl-L-alanyl-D-glutamyl-meso-2,6-diaminopimeloyl-D-alanyl-D-alanine + UDP-N-acetyl-alpha-D-glucosamine = di-trans,octa-cis-undecaprenyl diphospho-[N-acetyl-alpha-D-glucosaminyl-(1-&gt;4)]-N-acetyl-alpha-D-muramoyl-L-alanyl-D-glutamyl-meso-2,6-diaminopimeloyl-D-alanyl-D-alanine + UDP + H(+). It functions in the pathway cell wall biogenesis; peptidoglycan biosynthesis. Its function is as follows. Cell wall formation. Catalyzes the transfer of a GlcNAc subunit on undecaprenyl-pyrophosphoryl-MurNAc-pentapeptide (lipid intermediate I) to form undecaprenyl-pyrophosphoryl-MurNAc-(pentapeptide)GlcNAc (lipid intermediate II). This Salinibacter ruber (strain DSM 13855 / M31) protein is UDP-N-acetylglucosamine--N-acetylmuramyl-(pentapeptide) pyrophosphoryl-undecaprenol N-acetylglucosamine transferase.